We begin with the raw amino-acid sequence, 211 residues long: Thiamine-phosphate synthase (211 aa).

Residues 37–41 (QLRIK) and Asn-69 contribute to the 4-amino-2-methyl-5-(diphosphooxymethyl)pyrimidine site. Mg(2+) is bound by residues Asp-70 and Asp-89. A 4-amino-2-methyl-5-(diphosphooxymethyl)pyrimidine-binding site is contributed by Ser-108. Position 134-136 (134-136 (TQT)) interacts with 2-[(2R,5Z)-2-carboxy-4-methylthiazol-5(2H)-ylidene]ethyl phosphate. A 4-amino-2-methyl-5-(diphosphooxymethyl)pyrimidine-binding site is contributed by Lys-137. 2-[(2R,5Z)-2-carboxy-4-methylthiazol-5(2H)-ylidene]ethyl phosphate-binding positions include Gly-166 and 186-187 (VS).

This sequence belongs to the thiamine-phosphate synthase family. Mg(2+) serves as cofactor.

The enzyme catalyses 2-[(2R,5Z)-2-carboxy-4-methylthiazol-5(2H)-ylidene]ethyl phosphate + 4-amino-2-methyl-5-(diphosphooxymethyl)pyrimidine + 2 H(+) = thiamine phosphate + CO2 + diphosphate. It catalyses the reaction 2-(2-carboxy-4-methylthiazol-5-yl)ethyl phosphate + 4-amino-2-methyl-5-(diphosphooxymethyl)pyrimidine + 2 H(+) = thiamine phosphate + CO2 + diphosphate. The catalysed reaction is 4-methyl-5-(2-phosphooxyethyl)-thiazole + 4-amino-2-methyl-5-(diphosphooxymethyl)pyrimidine + H(+) = thiamine phosphate + diphosphate. It participates in cofactor biosynthesis; thiamine diphosphate biosynthesis; thiamine phosphate from 4-amino-2-methyl-5-diphosphomethylpyrimidine and 4-methyl-5-(2-phosphoethyl)-thiazole: step 1/1. Condenses 4-methyl-5-(beta-hydroxyethyl)thiazole monophosphate (THZ-P) and 2-methyl-4-amino-5-hydroxymethyl pyrimidine pyrophosphate (HMP-PP) to form thiamine monophosphate (TMP). The sequence is that of Thiamine-phosphate synthase from Enterobacter sp. (strain 638).